The primary structure comprises 494 residues: MTMMTMMMVSWSAFLQICWILMVRANQFNPGEPSGCRTNTPQSDLNSFLWTIKRDPPSYLYGTIHVPYTRVWDFIPQNSKQAFQESSVVYFELELTDPSTISALSRCQLLPAGQNLQDVLPPELYLRLKTHLEYVRLMLPSWMTPDQRGKGLYAEYLFNAIAGNWERKRPVWVMLMVNSLTEADIKTRGVPVLDLYLAQEAERMKKQTGAVEKVEEQCSPLNTLDFSQVIFALNQTLLQQESVRAGSLQVPYTTEHLITHYNCGDLHSIISHDTAQVPNFNNVTLRPSDQVTAQQIDSYFRRELIYKRNERMGRRVTALLQEQPHKTFFFAFGAGHFLGNNSVIDVLRREGYEVEHTPAGQPLHRRSGWRSADPADTDAALQPFLHHSRHHELQLLEGLELLEKVEHKLKKKHRRNKLKKQRQFNDLWVRMEDSVTAEAPPPLIHIINGYITVQTHPQEHERANHDRTFSGSSSRTGPALSALAVCVQMLRLLL.

Positions 1 to 25 (MTMMTMMMVSWSAFLQICWILMVRA) are cleaved as a signal peptide. The Extracellular segment spans residues 26 to 467 (NQFNPGEPSG…QEHERANHDR (442 aa)). N-linked (GlcNAc...) asparagine glycosylation is found at Asn-234 and Asn-282. The helical transmembrane segment at 468–488 (TFSGSSSRTGPALSALAVCVQ) threads the bilayer. At 489-494 (MLRLLL) the chain is on the cytoplasmic side.

Belongs to the TIKI family. It depends on Mn(2+) as a cofactor. Requires Co(2+) as cofactor.

Its subcellular location is the cell membrane. Functionally, metalloprotease that acts as a negative regulator of the Wnt signaling pathway by mediating the cleavage of the N-terminal residues of a subset of Wnt proteins. Following cleavage, Wnt proteins become oxidized and form large disulfide-bond oligomers, leading to their inactivation. This chain is Metalloprotease TIKI1 (trabd2a), found in Danio rerio (Zebrafish).